A 325-amino-acid polypeptide reads, in one-letter code: 4-hydroxy-3-methylbut-2-enyl diphosphate reductase (325 aa).

Residue Cys21 participates in [4Fe-4S] cluster binding. Positions 50 and 83 each coordinate (2E)-4-hydroxy-3-methylbut-2-enyl diphosphate. His50 and His83 together coordinate dimethylallyl diphosphate. Residues His50 and His83 each contribute to the isopentenyl diphosphate site. Position 105 (Cys105) interacts with [4Fe-4S] cluster. (2E)-4-hydroxy-3-methylbut-2-enyl diphosphate is bound at residue His133. Dimethylallyl diphosphate is bound at residue His133. His133 contacts isopentenyl diphosphate. Glu135 functions as the Proton donor in the catalytic mechanism. Thr173 is a (2E)-4-hydroxy-3-methylbut-2-enyl diphosphate binding site. [4Fe-4S] cluster is bound at residue Cys203. Residues Ser231, Ser232, Asn233, and Ser275 each coordinate (2E)-4-hydroxy-3-methylbut-2-enyl diphosphate. The dimethylallyl diphosphate site is built by Ser231, Ser232, Asn233, and Ser275. Positions 231, 232, 233, and 275 each coordinate isopentenyl diphosphate.

Belongs to the IspH family. It depends on [4Fe-4S] cluster as a cofactor.

The enzyme catalyses isopentenyl diphosphate + 2 oxidized [2Fe-2S]-[ferredoxin] + H2O = (2E)-4-hydroxy-3-methylbut-2-enyl diphosphate + 2 reduced [2Fe-2S]-[ferredoxin] + 2 H(+). It catalyses the reaction dimethylallyl diphosphate + 2 oxidized [2Fe-2S]-[ferredoxin] + H2O = (2E)-4-hydroxy-3-methylbut-2-enyl diphosphate + 2 reduced [2Fe-2S]-[ferredoxin] + 2 H(+). The protein operates within isoprenoid biosynthesis; dimethylallyl diphosphate biosynthesis; dimethylallyl diphosphate from (2E)-4-hydroxy-3-methylbutenyl diphosphate: step 1/1. Its pathway is isoprenoid biosynthesis; isopentenyl diphosphate biosynthesis via DXP pathway; isopentenyl diphosphate from 1-deoxy-D-xylulose 5-phosphate: step 6/6. Catalyzes the conversion of 1-hydroxy-2-methyl-2-(E)-butenyl 4-diphosphate (HMBPP) into a mixture of isopentenyl diphosphate (IPP) and dimethylallyl diphosphate (DMAPP). Acts in the terminal step of the DOXP/MEP pathway for isoprenoid precursor biosynthesis. The chain is 4-hydroxy-3-methylbut-2-enyl diphosphate reductase from Bordetella pertussis (strain Tohama I / ATCC BAA-589 / NCTC 13251).